The following is a 95-amino-acid chain: Secretoglobin family 2A member 2 (95 aa).

The N-terminal stretch at 1-18 (MKLVFLFLLVTIPICCYA) is a signal peptide. An N-linked (GlcNAc...) asparagine glycan is attached at Asn-35.

This sequence belongs to the secretoglobin family. Lipophilin subfamily. Prostatein is composed of three different peptides called C1, C2 and C3. These form covalent C1:C3 (F) and C2:C3 (S) heterodimers whose non-covalent association forms tetrameric (C1:C3/C3:C2) prostatein molecules. In terms of tissue distribution, highly expressed in ventral prostate.

Its subcellular location is the secreted. Functionally, part of prostatein which is the major secretory glycoprotein of ventral prostate gland. Steroid-binding protein; can bind non-polar steroids, cholesterol and a group of small proline-rich peptides. The chain is Secretoglobin family 2A member 2 (Scgb2a2) from Rattus norvegicus (Rat).